The primary structure comprises 378 residues: Deoxyguanosinetriphosphate triphosphohydrolase-like protein (378 aa).

An HD domain is found at 62 to 198 (RLTHTIEVAQ…AAVADDVAYN (137 aa)).

It belongs to the dGTPase family. Type 2 subfamily.

The chain is Deoxyguanosinetriphosphate triphosphohydrolase-like protein from Paracoccus denitrificans (strain Pd 1222).